We begin with the raw amino-acid sequence, 258 residues long: MLLVIDVGNTNTVLGVYHDGKLEYHWRIETSRHKTEDEFGMILRSLFDHSGLMFEQIDGIIISSVVPPIMFALERMCTKYFHIEPQIVGPGMKTGLNIKYDNPKEVGADRIVNAVAAIHLYGNPLIVVDFGTATTYCYIDENKQYMGGAIAPGITISTEALYSRAAKLPRIEITRPDNIIGKNTVSAMQSGILFGYVGQVEGIVKRMKWQAKQEPKVIATGGLAPLIANESDCIDIVDPFLTLKGLELIYERNRVGSV.

6 to 13 (DVGNTNTV) contributes to the ATP binding site. Substrate-binding positions include Tyr100 and 107 to 110 (GADR). Asp109 serves as the catalytic Proton acceptor. Asp129 lines the K(+) pocket. ATP is bound at residue Thr132. Residue Thr184 participates in substrate binding.

It belongs to the type III pantothenate kinase family. As to quaternary structure, homodimer. It depends on NH4(+) as a cofactor. Requires K(+) as cofactor.

The protein resides in the cytoplasm. The enzyme catalyses (R)-pantothenate + ATP = (R)-4'-phosphopantothenate + ADP + H(+). It participates in cofactor biosynthesis; coenzyme A biosynthesis; CoA from (R)-pantothenate: step 1/5. Not regulated by feedback inhibition by CoA and its thioesters as described for many other pantothenate kinases. Not inhibited by N-pentylpantothenamide (N5-Pan), and this compound cannot act as a substrate either. Catalyzes the phosphorylation of pantothenate (Pan), the first step in CoA biosynthesis. Cannot utilize a phosphoryl donor other than ATP. The protein is Type III pantothenate kinase (coaX) of Bacillus subtilis (strain 168).